Here is a 345-residue protein sequence, read N- to C-terminus: Uroporphyrinogen decarboxylase (345 aa).

Substrate is bound by residues 26–30 (RQAGR), aspartate 76, tyrosine 151, serine 205, and histidine 321.

This sequence belongs to the uroporphyrinogen decarboxylase family. Homodimer.

The protein localises to the cytoplasm. The enzyme catalyses uroporphyrinogen III + 4 H(+) = coproporphyrinogen III + 4 CO2. The protein operates within porphyrin-containing compound metabolism; protoporphyrin-IX biosynthesis; coproporphyrinogen-III from 5-aminolevulinate: step 4/4. Catalyzes the decarboxylation of four acetate groups of uroporphyrinogen-III to yield coproporphyrinogen-III. This chain is Uroporphyrinogen decarboxylase, found in Phenylobacterium zucineum (strain HLK1).